Reading from the N-terminus, the 153-residue chain is Aspartate carbamoyltransferase regulatory chain (153 aa).

Zn(2+) is bound by residues Cys109, Cys114, Cys138, and Cys141.

This sequence belongs to the PyrI family. As to quaternary structure, contains catalytic and regulatory chains. Requires Zn(2+) as cofactor.

Involved in allosteric regulation of aspartate carbamoyltransferase. The chain is Aspartate carbamoyltransferase regulatory chain from Salmonella newport (strain SL254).